The sequence spans 211 residues: Interleukin-6 (211 aa).

An N-terminal signal peptide occupies residues Met1–Pro29. An intrachain disulfide couples Cys71 to Cys77. Ser80 is modified (phosphoserine). Cys100 and Cys110 are oxidised to a cystine.

The protein belongs to the IL-6 superfamily. In terms of assembly, component of a hexamer of two molecules each of IL6, IL6R and IL6ST; first binds to IL6R to associate with the signaling subunit IL6ST. Interacts with IL6R (via the N-terminal ectodomain); this interaction may be affected by IL6R-binding with SORL1, hence decreasing IL6 cis signaling. Interacts with SORL1 (via the N-terminal ectodomain); this interaction leads to IL6 internalization and lysosomal degradation. May form a trimeric complex with the soluble SORL1 ectodomain and soluble IL6R receptor; this interaction might stabilize circulating IL6, hence promoting IL6 trans signaling.

The protein localises to the secreted. Functionally, cytokine with a wide variety of biological functions in immunity, tissue regeneration, and metabolism. Binds to IL6R, then the complex associates to the signaling subunit IL6ST/gp130 to trigger the intracellular IL6-signaling pathway. The interaction with the membrane-bound IL6R and IL6ST stimulates 'classic signaling', whereas the binding of IL6 and soluble IL6R to IL6ST stimulates 'trans-signaling'. Alternatively, 'cluster signaling' occurs when membrane-bound IL6:IL6R complexes on transmitter cells activate IL6ST receptors on neighboring receiver cells. IL6 is a potent inducer of the acute phase response. Rapid production of IL6 contributes to host defense during infection and tissue injury, but excessive IL6 synthesis is involved in disease pathology. In the innate immune response, is synthesized by myeloid cells, such as macrophages and dendritic cells, upon recognition of pathogens through toll-like receptors (TLRs) at the site of infection or tissue injury. In the adaptive immune response, is required for the differentiation of B cells into immunoglobulin-secreting cells. Plays a major role in the differentiation of CD4(+) T cell subsets. Essential factor for the development of T follicular helper (Tfh) cells that are required for the induction of germinal-center formation. Required to drive naive CD4(+) T cells to the Th17 lineage. Also required for proliferation of myeloma cells and the survival of plasmablast cells. In terms of biological role, acts as an essential factor in bone homeostasis and on vessels directly or indirectly by induction of VEGF, resulting in increased angiogenesis activity and vascular permeability. Induces, through 'trans-signaling' and synergistically with IL1B and TNF, the production of VEGF. Involved in metabolic controls, is discharged into the bloodstream after muscle contraction increasing lipolysis and improving insulin resistance. 'Trans-signaling' in central nervous system also regulates energy and glucose homeostasis. Mediates, through GLP-1, crosstalk between insulin-sensitive tissues, intestinal L cells and pancreatic islets to adapt to changes in insulin demand. Also acts as a myokine. Plays a protective role during liver injury, being required for maintenance of tissue regeneration. Also has a pivotal role in iron metabolism by regulating HAMP/hepcidin expression upon inflammation or bacterial infection. Through activation of IL6ST-YAP-NOTCH pathway, induces inflammation-induced epithelial regeneration. The sequence is that of Interleukin-6 (IL6) from Camelus bactrianus (Bactrian camel).